The primary structure comprises 262 residues: ELL-associated factor 2 (262 aa).

The segment at 17–104 (LKLGESFEKQ…TGECRLEKLS (88 aa)) is necessary for interaction with ELL. Residues S146, S151, and S154 each carry the phosphoserine modification. The interval 170 to 237 (MDQMSSCDSS…EADATCHRLQ (68 aa)) is disordered. Low complexity predominate over residues 174–192 (SSCDSSSDSKSSSSSSSED). Positions 177-262 (DSSSDSKSSS…LSESESDSED (86 aa)) are necessary for transactivation activity. Residues 193 to 202 (SSSDSEDDDQ) show a composition bias toward acidic residues. Over residues 227–237 (SEADATCHRLQ) the composition is skewed to basic and acidic residues. The segment at 248-262 (RSDLQLSESESDSED) is necessary for interaction with TCEA1 and transactivation activity.

It belongs to the EAF family. Component of the super elongation complex (SEC), at least composed of EAF1, EAF2, CDK9, MLLT3/AF9, AFF (AFF1 or AFF4), the P-TEFb complex and ELL (ELL, ELL2 or ELL3). Interacts with ELL and ELL2. Isoform 1 and isoform 2 interact with TCEA1. In terms of tissue distribution, isoform 1 is expressed in ovary, uterus, mammary glands, brain, spleen, liver, lung, thymus, kidney, skeletal muscle, skin and testis. Isoform 2 is expressed in kidney.

Its subcellular location is the nucleus speckle. Functionally, acts as a transcriptional transactivator of ELL and ELL2 elongation activities. Acts as a transcriptional transactivator of TCEA1 elongation activity. The chain is ELL-associated factor 2 (Eaf2) from Mus musculus (Mouse).